The sequence spans 261 residues: uncharacterized protein (261 aa).

A signal peptide spans Met-1–Gly-22. A lipid anchor (N-palmitoyl cysteine) is attached at Cys-23. A lipid anchor (S-diacylglycerol cysteine) is attached at Cys-23.

It belongs to the staphylococcal tandem lipoprotein family.

It localises to the cell membrane. This is an uncharacterized protein from Staphylococcus aureus (strain N315).